We begin with the raw amino-acid sequence, 692 residues long: MSREYDLKDYRNIGIMAHIDAGKTTTTERILFHTGKIHKIGETHDGGSQMDFMAQEKERGITITSAATTAFWRGKRINIIDTPGHVDFTVEVERSLRVLDGAVAVLDAQSGVEPQTETVWRQATNYKVPRIVFVNKMDKAGANLEESIKSVKTRLNGNAVAIQLNMGSESDYRGHIDLVEMKAWEFDGKPEENGKEIEIPAEYLEAAQIERSKLIEAVSSFDDEVMMLALEEQEIPVDLLKSAIRKATLTSEFFPVVCGTAFKNKGVKAMIDAVVDYLPSPLDVPAIKGYFQEKEVLVTASDENDFSALAFKIMNDPFVGSLTFFRVYSGILSKGSYVYNTTKDKKERIGRILQMHANSREEIDEVRTGDIAAAVGLKDTTTGDTIVGDKSKHIILEKMVFPEPVISQALEPESKAATEKLSLGLQKLAAEDPTFRTFTDTETGQTIIAGMGELHLDIIVDRLRREFGVQVKVGAPQVSYRETITAKADVEGKYIKQSGGKGQYGHVWITFEPNPNNGFEFVDKIVGGKIPKEYIKTIQKGLEEKMASGILAGYPMIDLKATLFDGSYHEVDSSEMAYKIAASMALTKAKDVVKTVLLEPIMDVSVVFPKEYYGDVVGDLSRRRGQIINDETRSDGASVIKSHVPLSEMFGYATDLRSMTKGRGTYQMHFDHYERTPRNIADEIIKKRNIKN.

Positions 8–282 (KDYRNIGIMA…AVVDYLPSPL (275 aa)) constitute a tr-type G domain. Residues 17-24 (AHIDAGKT), 81-85 (DTPGH), and 135-138 (NKMD) each bind GTP.

It belongs to the TRAFAC class translation factor GTPase superfamily. Classic translation factor GTPase family. EF-G/EF-2 subfamily.

It is found in the cytoplasm. Catalyzes the GTP-dependent ribosomal translocation step during translation elongation. During this step, the ribosome changes from the pre-translocational (PRE) to the post-translocational (POST) state as the newly formed A-site-bound peptidyl-tRNA and P-site-bound deacylated tRNA move to the P and E sites, respectively. Catalyzes the coordinated movement of the two tRNA molecules, the mRNA and conformational changes in the ribosome. In Mycoplasmopsis pulmonis (strain UAB CTIP) (Mycoplasma pulmonis), this protein is Elongation factor G (fusA).